The chain runs to 693 residues: Sister chromatid cohesion 1 protein 3 (693 aa).

Disordered stretches follow at residues 167-250 (IPMD…PGTV), 262-361 (DLSP…KNFD), 460-511 (PVSP…TFDN), and 545-573 (TQSG…GQRN). Composition is skewed to basic and acidic residues over residues 178–201 (VSRH…EPRD) and 232–243 (TEERIPNSERND). Residues 264–277 (SPTSHPSFAAQQQD) are compositionally biased toward polar residues. The span at 278 to 295 (VRVERTESLDETLNEKEP) shows a compositional bias: basic and acidic residues. Positions 316 to 325 (RSGSPGSAAG) are enriched in low complexity. 2 stretches are compositionally biased toward polar residues: residues 465 to 483 (PDST…QQTE) and 545 to 564 (TQSG…TSTV).

The protein belongs to the rad21 family. As to quaternary structure, component of the cohesin complex. In terms of tissue distribution, low expression in shoots, buds, siliques, leaves and roots. Found in, but not limited to, actively dividing cells: in procambium, protoderm and ground meristem in roots, and in shoot and floral meristems.

It is found in the nucleus. In terms of biological role, may be involved in sister chromatid cohesion during mitosis. The sequence is that of Sister chromatid cohesion 1 protein 3 (SYN3) from Arabidopsis thaliana (Mouse-ear cress).